Reading from the N-terminus, the 393-residue chain is Cytochrome b (393 aa).

4 consecutive transmembrane segments (helical) span residues 32–52 (FGSL…TLAM), 76–98 (WLIR…LHMG), 113–133 (VWTL…LGYV), and 179–199 (FFAL…MHLI). Heme b is bound by residues histidine 82 and histidine 96. 2 residues coordinate heme b: histidine 183 and histidine 197. Histidine 202 is an a ubiquinone binding site. Transmembrane regions (helical) follow at residues 226 to 246 (FIFK…IFVF), 290 to 310 (LLGV…PFTD), 322 to 342 (LSKI…KLGA), and 349 to 369 (FIEF…IIVP).

It belongs to the cytochrome b family. As to quaternary structure, fungal cytochrome b-c1 complex contains 10 subunits; 3 respiratory subunits, 2 core proteins and 5 low-molecular weight proteins. Cytochrome b-c1 complex is a homodimer. It depends on heme b as a cofactor.

The protein resides in the mitochondrion inner membrane. Its function is as follows. Component of the ubiquinol-cytochrome c reductase complex (complex III or cytochrome b-c1 complex) that is part of the mitochondrial respiratory chain. The b-c1 complex mediates electron transfer from ubiquinol to cytochrome c. Contributes to the generation of a proton gradient across the mitochondrial membrane that is then used for ATP synthesis. The protein is Cytochrome b (COB) of Venturia inaequalis (Apple scab fungus).